Here is a 529-residue protein sequence, read N- to C-terminus: MASFVDRVVLHVSGGTGGHGCVSVHREKFKPLGGPDGGNGGDGGDVILRVDPQTTTLLDYHHAPHRHATNGGPGMGDWRGGKNGETLILPVPEGTVVKTKDGRVLADLVGEGTEFIAAAGGPGGLGNAALSSQKRRAPGFALLGIEGESSDIVLELKSIADIALVGFPSAGKSSLIAAMSAARPKIADYPFTTLIPNLGVVQAGDVRFTIADVPGLIEGASEGKGLGHHFLRHVERCAALVHVLDCGTLEADRDPLSDLAIIEAELEKYAVDMSYAGTDGEVVPLNHRPRLVALNKVDLPDGKDMAEFVRPELESRGYRVFEISATSHEGLRQLGFAMAEIVKAARDAVAATPPKVHAPVLRPRAVNEAGFKIRREEKNLEPLFRVLGDKPVRWVKQTDFTNEEAIGYLADRLAKLGVENELFKQGAKPGDTVVIGEDDGVVFDWEPTMMAGAELLASPRGTDVRFADIGDRPTRGQKRDEQQERRDAKAAARAELEAERKAGIWTESVSGRRAARPLQESGLTTENEE.

The region spanning 2 to 159 (ASFVDRVVLH…SDIVLELKSI (158 aa)) is the Obg domain. The OBG-type G domain maps to 160–343 (ADIALVGFPS…LGFAMAEIVK (184 aa)). Residues 166 to 173 (GFPSAGKS), 191 to 195 (FTTLI), 212 to 215 (DVPG), 295 to 298 (NKVD), and 324 to 326 (SAT) contribute to the GTP site. Positions 173 and 193 each coordinate Mg(2+). One can recognise an OCT domain in the interval 363 to 447 (PRAVNEAGFK…DDGVVFDWEP (85 aa)). Residues 466 to 502 (FADIGDRPTRGQKRDEQQERRDAKAAARAELEAERKA) show a composition bias toward basic and acidic residues. Residues 466-529 (FADIGDRPTR…ESGLTTENEE (64 aa)) form a disordered region.

This sequence belongs to the TRAFAC class OBG-HflX-like GTPase superfamily. OBG GTPase family. In terms of assembly, monomer. Requires Mg(2+) as cofactor.

The protein localises to the cytoplasm. An essential GTPase which binds GTP, GDP and possibly (p)ppGpp with moderate affinity, with high nucleotide exchange rates and a fairly low GTP hydrolysis rate. Plays a role in control of the cell cycle, stress response, ribosome biogenesis and in those bacteria that undergo differentiation, in morphogenesis control. This Arthrobacter sp. (strain FB24) protein is GTPase Obg.